Consider the following 436-residue polypeptide: 5-hydroxytryptamine receptor 6 (436 aa).

Over 1 to 27 the chain is Extracellular; it reads MVPEPGPVNSSTPAWGPGPPPAPGGSG. N-linked (GlcNAc...) asparagine glycosylation occurs at asparagine 9. The helical transmembrane segment at 28 to 52 threads the bilayer; the sequence is WVAAALCVVIVLTAAANSLLIVLIC. Residues 53-62 lie on the Cytoplasmic side of the membrane; sequence TQPALRNTSN. Residues 63–88 form a helical membrane-spanning segment; that stretch reads FFLVSLFTSDLMVGLVVMPPAMLNAL. Residues 89 to 96 lie on the Extracellular side of the membrane; it reads YGRWVLAR. The helical transmembrane segment at 97–122 threads the bilayer; it reads GLCLLWTAFDVMCCSASILNLCLISL. The cysteines at positions 99 and 180 are disulfide-linked. Residue aspartate 106 participates in serotonin binding. At 123–142 the chain is on the cytoplasmic side; that stretch reads DRYLLILSPLRYKLRMTAPR. The helical transmembrane segment at 143–167 threads the bilayer; that stretch reads ALALILGAWSLAALASFLPLLLGWH. The Extracellular segment spans residues 168 to 185; that stretch reads ELGKARTPAPGQCRLLAS. The helical transmembrane segment at 186-209 threads the bilayer; it reads LPFVLVASGVTFFLPSGAICFTYC. The Cytoplasmic segment spans residues 210–266; it reads RILLAARKQAVQVASLTTGTAGQALETLQVPRTPRPGMESADSRRLATKHSRKALKA. Residues 267–293 form a helical membrane-spanning segment; that stretch reads SLTLGILLGMFFVTWLPFFVANIAQAV. Asparagine 288 contributes to the serotonin binding site. Over 294 to 299 the chain is Extracellular; that stretch reads CDCISP. A helical membrane pass occupies residues 300–323; it reads GLFDVLTWLGYCNSTMNPIIYPLF. Topologically, residues 324–436 are cytoplasmic; sequence MRDFKRALGR…RYGRIHSVPP (113 aa).

It belongs to the G-protein coupled receptor 1 family. As to quaternary structure, interacts with MTOR, RPTOR and NF1. Interacts with CDK5. As to expression, localized exclusively in the central nervous system, predominantly in the corpus striatum but also in various limbic and cortical regions.

Its subcellular location is the cell membrane. G-protein coupled receptor for 5-hydroxytryptamine (serotonin), a biogenic hormone that functions as a neurotransmitter, a hormone and a mitogen. Also has a high affinity for tricyclic psychotropic drugs. Ligand binding causes a conformation change that triggers signaling via guanine nucleotide-binding proteins (G proteins) and modulates the activity of downstream effectors. HTR6 is coupled to G(s) G alpha proteins and mediates activation of adenylate cyclase activity. Controls pyramidal neurons migration during corticogenesis, through the regulation of CDK5 activity. Is an activator of mTOR signaling. The polypeptide is 5-hydroxytryptamine receptor 6 (Htr6) (Rattus norvegicus (Rat)).